We begin with the raw amino-acid sequence, 1686 residues long: A disintegrin and metalloproteinase with thrombospondin motifs 7 (1686 aa).

The signal sequence occupies residues 1 to 27 (MPGGPSPRSPAPLLRPLLLLLCALAPG). Residues 28–236 (APGPAPGRAT…RPRLRRLHQR (209 aa)) constitute a propeptide that is removed on maturation. Asparagine 94 carries an N-linked (GlcNAc...) asparagine glycan. The Cysteine switch signature appears at 202–209 (STCGVQVY). Cysteine 204 contacts Zn(2+). The 211-residue stretch at 242–452 (KWVETLVVAD…GWGLCLDDPP (211 aa)) folds into the Peptidase M12B domain. 11 disulfides stabilise this stretch: cysteine 318-cysteine 372, cysteine 347-cysteine 354, cysteine 366-cysteine 447, cysteine 405-cysteine 431, cysteine 474-cysteine 497, cysteine 485-cysteine 503, cysteine 492-cysteine 522, cysteine 516-cysteine 527, cysteine 550-cysteine 587, cysteine 554-cysteine 592, and cysteine 565-cysteine 577. Histidine 388 is a Zn(2+) binding site. Residue glutamate 389 is part of the active site. Residues histidine 392 and histidine 398 each contribute to the Zn(2+) site. One can recognise a Disintegrin domain in the interval 462–537 (VPPGVLYDVS…VPVGFRPEAV (76 aa)). A TSP type-1 1 domain is found at 538 to 593 (DGGWSGWSAWSICSRSCGMGVQSAERQCTQPTPKYKGRYCVGERKRFRLCNLQACP). Residues asparagine 693 and asparagine 778 are each glycosylated (N-linked (GlcNAc...) asparagine). The interval 698 to 809 (HTVSGTFEEA…PGVHYEYTIH (112 aa)) is spacer. 3 TSP type-1 domains span residues 821–880 (PVFS…QPCP), 881–940 (ARWW…NRHV), and 942–995 (CPAT…PLCR). Disordered regions lie at residues 1024–1043 (HHLAPRPSPASSPKPGTMGN), 1080–1257 (PSEE…SPDV), and 1344–1396 (LGHM…PLAP). Residues 1182-1205 (DGLQTPATPESQNDFPVGKDSQSQ) show a composition bias toward polar residues. Residues 1210–1226 (WRDRTNEVFKDDEEPKG) show a composition bias toward basic and acidic residues. A compositionally biased stretch (low complexity) spans 1360-1375 (PESLSPEVPLSSRLLS). 4 TSP type-1 domains span residues 1411–1459 (RNAG…RRCH), 1462–1522 (PCAT…QPCL), 1523–1567 (SWYT…PCNT), and 1569–1629 (PCTQ…EDCE). The 41-residue stretch at 1632 to 1672 (EPPRCERDRLSFGFCETLRLLGRCQLPTIRTQCCRSCSPPS) folds into the PLAC domain. Residues 1666–1686 (RSCSPPSHGAPSRGHQRVARR) form a disordered region.

In terms of assembly, interacts with COMP. Requires Zn(2+) as cofactor. N-glycosylated. Can be O-fucosylated by POFUT2 on a serine or a threonine residue found within the consensus sequence C1-X(2)-(S/T)-C2-G of the TSP type-1 repeat domains where C1 and C2 are the first and second cysteine residue of the repeat, respectively. Fucosylated repeats can then be further glycosylated by the addition of a beta-1,3-glucose residue by the glucosyltransferase, B3GALTL. Fucosylation mediates the efficient secretion of ADAMTS family members. Can also be C-glycosylated with one or two mannose molecules on tryptophan residues within the consensus sequence W-X-X-W of the TPRs. N- and C-glycosylations can also facilitate secretion. In terms of processing, O-glycosylated proteoglycan; contains chondroitin sulfate. Post-translationally, may be cleaved by a furin endopeptidase. The precursor is sequentially processed. As to expression, expressed in heart, brain, placenta, lung, liver, skeletal muscle, kidney and pancreas. Detected in meniscus, bone, tendon, cartilage, synovium, fat and ligaments.

The protein localises to the secreted. It is found in the extracellular space. The protein resides in the extracellular matrix. Metalloprotease. Was previously shown to degrade COMP. However, a later study found no activity against COMP. The protein is A disintegrin and metalloproteinase with thrombospondin motifs 7 (ADAMTS7) of Homo sapiens (Human).